A 562-amino-acid polypeptide reads, in one-letter code: Transmembrane E3 ubiquitin-protein ligase FLY1 (562 aa).

A signal peptide spans 1 to 32 (MKKREHLGLGFFEWQIILWLSIWLAISQQALG). Over 33–262 (LRPIREKPRS…TSVNVEVYYN (230 aa)) the chain is Lumenal. Residues 263–283 (KAVNYTLMVTFVSFLQVLLLI) form a helical membrane-spanning segment. Residues 284 to 297 (RQMEHGNTQSGAAK) lie on the Cytoplasmic side of the membrane. Residues 298–318 (VSIVMIGQQAIMDAYLCLLHL) traverse the membrane as a helical segment. At 319 to 321 (TAG) the chain is on the lumenal side. The chain crosses the membrane as a helical span at residues 322–342 (ILVESLFNAFATAAFFKFVVF). Residues 343–373 (SIFEMRYLLAIWKATRPSNSGEGWETMRREL) are Cytoplasmic-facing. A helical transmembrane segment spans residues 374-394 (SFLYSRFYGILLGGILIMYQF). Over 395–397 (HNY) the chain is Lumenal. Residues 398 to 418 (MQPILLLMYSFWIPQIVANVV) traverse the membrane as a helical segment. The Cytoplasmic portion of the chain corresponds to 419–426 (RDSRKPLH). A helical membrane pass occupies residues 427–447 (PYYILGMTATRLAIPLYVFGC). The Lumenal portion of the chain corresponds to 448 to 458 (PHNFMRVEPNK). A helical transmembrane segment spans residues 459–479 (VWCICLCTFMGLQAVILLLQH). Residues 480-562 (YFGSRCFVPR…PTCRRSLPPA (83 aa)) are Cytoplasmic-facing. The RING-type; atypical zinc-finger motif lies at 512-556 (CVICMTAIDLRQHTSDCMVTPCEHFFHSGCLQRWMDIKMECPTCR).

In terms of tissue distribution, highly expressed in stems. Expressed in root xylem and seed coat.

It is found in the endomembrane system. It carries out the reaction S-ubiquitinyl-[E2 ubiquitin-conjugating enzyme]-L-cysteine + [acceptor protein]-L-lysine = [E2 ubiquitin-conjugating enzyme]-L-cysteine + N(6)-ubiquitinyl-[acceptor protein]-L-lysine.. It functions in the pathway protein modification; protein ubiquitination. Functionally, E3 ubiquitin-protein ligase that regulates the degree of methylesterification of pectin in seed mucilage. May be involved in the recycling of pectin methylesterase enzymes in the endomembrane system of seed coat epidermal cells. Possesses E3 ubiquitin-protein ligase activity in vitro when associated with the E1 enzyme UBA1 and the E2 enzyme UBC8. May be involved in xylem development. This Arabidopsis thaliana (Mouse-ear cress) protein is Transmembrane E3 ubiquitin-protein ligase FLY1.